The following is a 220-amino-acid chain: Fructose-6-phosphate aldolase (220 aa).

Catalysis depends on Lys-85, which acts as the Schiff-base intermediate with substrate.

It belongs to the transaldolase family. Type 3A subfamily. As to quaternary structure, homodecamer.

The protein localises to the cytoplasm. The enzyme catalyses beta-D-fructose 6-phosphate = dihydroxyacetone + D-glyceraldehyde 3-phosphate. Functionally, catalyzes the reversible formation of fructose 6-phosphate from dihydroxyacetone and D-glyceraldehyde 3-phosphate via an aldolization reaction. This chain is Fructose-6-phosphate aldolase, found in Salmonella gallinarum (strain 287/91 / NCTC 13346).